The sequence spans 662 residues: UvrABC system protein B (662 aa).

Residues 31–188 (DNIEGGEKAQ…NDLVDIQFER (158 aa)) enclose the Helicase ATP-binding domain. Residue 44–51 (GATGTGKT) participates in ATP binding. A Beta-hairpin motif is present at residues 97–120 (YYDYYQPEAYVPSSDTYIEKDSSV). The Helicase C-terminal domain maps to 435-601 (QIDDLLGEIN…TIKKEIRDLI (167 aa)). Residues 626–661 (KELVKKLEKQMQEAVEVLDFELAAQIRDMMLEVKAL) enclose the UVR domain.

Belongs to the UvrB family. As to quaternary structure, forms a heterotetramer with UvrA during the search for lesions. Interacts with UvrC in an incision complex.

Its subcellular location is the cytoplasm. In terms of biological role, the UvrABC repair system catalyzes the recognition and processing of DNA lesions. A damage recognition complex composed of 2 UvrA and 2 UvrB subunits scans DNA for abnormalities. Upon binding of the UvrA(2)B(2) complex to a putative damaged site, the DNA wraps around one UvrB monomer. DNA wrap is dependent on ATP binding by UvrB and probably causes local melting of the DNA helix, facilitating insertion of UvrB beta-hairpin between the DNA strands. Then UvrB probes one DNA strand for the presence of a lesion. If a lesion is found the UvrA subunits dissociate and the UvrB-DNA preincision complex is formed. This complex is subsequently bound by UvrC and the second UvrB is released. If no lesion is found, the DNA wraps around the other UvrB subunit that will check the other stand for damage. This Streptococcus pneumoniae (strain ATCC 700669 / Spain 23F-1) protein is UvrABC system protein B.